The chain runs to 137 residues: Leaf-specific thionin (137 aa).

Residues 1–28 form the signal peptide; the sequence is MATNKSIKSVVICVLILGLVLEQVQVEA. 4 disulfides stabilise this stretch: Cys-31–Cys-68, Cys-32–Cys-60, Cys-40–Cys-58, and Cys-44–Cys-54. The propeptide at 75 to 137 is acidic domain; sequence LNLLPESGEP…DGEVIQSVEA (63 aa).

This sequence belongs to the plant thionin (TC 1.C.44) family. 4 C-C subfamily.

The protein localises to the secreted. Its function is as follows. Thionins are small plant proteins which are toxic to animal cells. They seem to exert their toxic effect at the level of the cell membrane. Their precise function is not known. The protein is Leaf-specific thionin (THI1.5) of Hordeum vulgare (Barley).